Here is a 594-residue protein sequence, read N- to C-terminus: Segmentation polarity homeobox protein engrailed (594 aa).

Disordered stretches follow at residues 1 to 64, 76 to 127, 141 to 164, 198 to 217, 231 to 299, 387 to 458, and 474 to 501; these read MALE…TRDE, IKQE…PASI, KATA…ISPG, HYYQ…PQRA, ISKS…PTGS, AGTG…GSEN, and DRPS…RPRT. Positions 22-60 are enriched in low complexity; that stretch reads SQSPTSTTTVTMATASPVPACTTTTTTTSTSGASAASSP. Positions 92–112 are enriched in basic residues; sequence PHHHQHPHHHQLPHHPHHQHH. Residues 151 to 164 are compositionally biased toward pro residues; sequence HPQPPAIREPISPG. Residues 237-247 are compositionally biased toward polar residues; it reads LCSSNGSSSAT. 2 stretches are compositionally biased toward low complexity: residues 278–299 and 387–402; these read ASPS…PTGS and AGTG…ANGA. 2 stretches are compositionally biased toward polar residues: residues 426–436 and 448–458; these read SSETNGSSSQD and ETSSTKDGSEN. The segment covering 487–499 has biased composition (basic and acidic residues); the sequence is QPKEKGDSEEKRP. A DNA-binding region (homeobox) is located at residues 496 to 555; sequence EKRPRTAFSNAQLQRLKNEFNENRYLTEKRRQTLSAELGLNEAQIKIWFQNKRAKIKKSS.

The protein belongs to the engrailed homeobox family.

It localises to the nucleus. This protein specifies the body segmentation pattern. It is required for the development of the central nervous system. Transcriptional regulator that repress activated promoters. The polypeptide is Segmentation polarity homeobox protein engrailed (en) (Anopheles gambiae (African malaria mosquito)).